We begin with the raw amino-acid sequence, 840 residues long: Sorting nexin-25 (840 aa).

A PXA domain is found at 1–164 (MDKALKEVFD…MLLAQLAYRE (164 aa)). Residues 287-401 (QFEDILANTF…IVSDLYEKLL (115 aa)) enclose the RGS domain. The stretch at 434–499 (TNQINEQASF…RTDLQLHMAR (66 aa)) forms a coiled coil. The PX domain occupies 508–628 (GMWKASITSG…AFLSPSPDYL (121 aa)). S665 carries the phosphoserine modification.

It belongs to the sorting nexin family.

Its subcellular location is the endosome membrane. Functionally, may be involved in several stages of intracellular trafficking. In Homo sapiens (Human), this protein is Sorting nexin-25 (SNX25).